The sequence spans 238 residues: uncharacterized protein (238 aa).

The protein belongs to the chlamydial CPn_0658/CT_538/TC_0825 family.

This is an uncharacterized protein from Chlamydia trachomatis serovar D (strain ATCC VR-885 / DSM 19411 / UW-3/Cx).